The sequence spans 443 residues: Glutamate--tRNA ligase 1 (443 aa).

Positions 9–19 (PSPTGYLHVGN) match the 'HIGH' region motif. A 'KMSKS' region motif is present at residues 238–242 (KISKR). Lysine 241 serves as a coordination point for ATP.

This sequence belongs to the class-I aminoacyl-tRNA synthetase family. Glutamate--tRNA ligase type 1 subfamily. As to quaternary structure, monomer.

It is found in the cytoplasm. It carries out the reaction tRNA(Glu) + L-glutamate + ATP = L-glutamyl-tRNA(Glu) + AMP + diphosphate. In terms of biological role, catalyzes the attachment of glutamate to tRNA(Glu) in a two-step reaction: glutamate is first activated by ATP to form Glu-AMP and then transferred to the acceptor end of tRNA(Glu). This is Glutamate--tRNA ligase 1 from Ehrlichia ruminantium (strain Welgevonden).